We begin with the raw amino-acid sequence, 440 residues long: Doublesex- and mab-3-related transcription factor A2 (440 aa).

Positions 59 to 106 form a DNA-binding region, DM; the sequence is CARCRNHGVVSALKGHKRYCRWKDCMCAKCTLIAERQRVMAAQVALRR. Residues 167–261 are disordered; it reads PKTPLPGTVT…SPSSAASRQM (95 aa). Basic and acidic residues predominate over residues 199 to 213; the sequence is DMRHGSGSENGDRES. The segment covering 229–241 has biased composition (low complexity); that stretch reads TPGSISPIGSDSG. A compositionally biased stretch (polar residues) spans 251–261; the sequence is PSPSSAASRQM. The DMA domain maps to 261–296; the sequence is MNAIDILTRVFPNHKRSVLELVLQGCGKNVVQAIEQ.

The protein belongs to the DMRT family. Restrictively expressed in brain and developing germ cells, especially in spermatogonia, spermatocytes, spermatids, and sperm cells, and in developing oocytes, including early perinucleolus stage oocyte, late yolk vesicle stage oocyte, and oil drop stage oocyte.

The protein localises to the nucleus. May be involved in sexual development. This is Doublesex- and mab-3-related transcription factor A2 (dmrta2) from Danio rerio (Zebrafish).